A 492-amino-acid polypeptide reads, in one-letter code: Heat shock factor protein 4 (492 aa).

Residues 17 to 122 mediate DNA binding; that stretch reads VPAFLGKLWA…LLERVRRKVP (106 aa). Residues 129-203 form a hydrophobic repeat HR-A/B region; that stretch reads SRWRPEDLSR…GPLQTGPSST (75 aa). The interval 245–322 is interactions with DUSP26, MAPK1 and MAPK2; that stretch reads LPETTLGLSP…ECDFCVTAPP (78 aa). The interval 263 to 282 is disordered; the sequence is SDIPEDSPSPEGHRLSPSGG. Lys-293 participates in a covalent cross-link: Glycyl lysine isopeptide (Lys-Gly) (interchain with G-Cter in SUMO). At Ser-298 the chain carries Phosphoserine. The interval 337–378 is disordered; the sequence is GSYSPEGPRSVQQPEPRGPREVPDRGTLGLDRGNRSPESLLP. The hydrophobic repeat HR-C stretch occupies residues 364 to 389; it reads LGLDRGNRSPESLLPPMLLRPAPETL.

It belongs to the HSF family. As to quaternary structure, homotrimer. Exhibits constitutive DNA binding and forms trimers even in the absence of stress. Interacts with ALKBH4, DUSP26, MAPK1, MAPK2, MAPK8 and MAP kinase p38. Post-translationally, phosphorylated mainly on serine residues. Phosphorylation on Ser-298 promotes sumoylation on Lys-293. In terms of processing, isoform HSF4B is constitutively sumoylated. Sumoylation represses the transcriptional activity and is promoted by phosphorylation on Ser-298. HSFA is not sumoylated. Preferentially expressed in brain and lung. Also found in the eye. Slightly detected in liver and skeletal muscle. Isoform B is the major species in various tissues.

It localises to the nucleus. Its function is as follows. Heat-shock transcription factor that specifically binds heat shock promoter elements (HSE). Required for denucleation and organelle rupture and degradation that occur during eye lens terminal differentiation, when fiber cells that compose the lens degrade all membrane-bound organelles in order to provide lens with transparency to allow the passage of light. In this process, may regulate denucleation of lens fiber cells in part by activating DNASE2B transcription. May be involved in DNA repair through the transcriptional regulation of RAD51. May up-regulate p53/TP53 protein in eye lens fiber cells, possibly through protein stabilization. In the eye lens, controls the expression of alpha-crystallin B chain/CRYAB and consequently may be involved in the regulation of lysosomal acidification. Functionally, transcriptional repressor. Transcriptional activator. The chain is Heat shock factor protein 4 (Hsf4) from Mus musculus (Mouse).